A 297-amino-acid chain; its full sequence is Phosphate import ATP-binding protein PstB (297 aa).

Residues Met-50–Ile-292 form the ABC transporter domain. Gly-82 to Ser-89 contacts ATP.

The protein belongs to the ABC transporter superfamily. Phosphate importer (TC 3.A.1.7) family. The complex is composed of two ATP-binding proteins (PstB), two transmembrane proteins (PstC and PstA) and a solute-binding protein (PstS).

Its subcellular location is the cell inner membrane. It carries out the reaction phosphate(out) + ATP + H2O = ADP + 2 phosphate(in) + H(+). Part of the ABC transporter complex PstSACB involved in phosphate import. Responsible for energy coupling to the transport system. In Alcanivorax borkumensis (strain ATCC 700651 / DSM 11573 / NCIMB 13689 / SK2), this protein is Phosphate import ATP-binding protein PstB.